Consider the following 187-residue polypeptide: Cerebral dopamine neurotrophic factor (187 aa).

Residues 1–24 (MRCTSPAALVTFCAGLWISNHVLA) form the signal peptide. Disulfide bonds link C37–C124, C40–C113, and C71–C82.

This sequence belongs to the ARMET family.

The protein resides in the secreted. Its function is as follows. Trophic factor for dopamine neurons. Prevents the 6-hydroxydopamine (6-OHDA)-induced degeneration of dopaminergic neurons. When administered after 6-OHDA-lesioning, restores the dopaminergic function and prevents the degeneration of dopaminergic neurons in substantia nigra. The polypeptide is Cerebral dopamine neurotrophic factor (Cdnf) (Rattus norvegicus (Rat)).